A 340-amino-acid chain; its full sequence is Glutamine synthetase (340 aa).

In terms of domain architecture, GS beta-grasp spans 3–82 (IKAEYIWIDG…LCEVLHTDLT (80 aa)). A GS catalytic domain is found at 88–340 (TRALLRPVAE…CTELARREQI (253 aa)). Mg(2+) is bound by residues glutamate 109, glutamate 111, glutamate 171, and glutamate 178. L-glutamate is bound at residue glutamate 276.

The protein belongs to the glutamine synthetase family. In terms of assembly, homooctamer and homotetramer. The cofactor is Mg(2+).

Its subcellular location is the cytoplasm. It catalyses the reaction L-glutamate + NH4(+) + ATP = L-glutamine + ADP + phosphate + H(+). Catalyzes the ATP-dependent biosynthesis of glutamine from glutamate and ammonia. The polypeptide is Glutamine synthetase (Streptomyces hygroscopicus).